The chain runs to 194 residues: NADH-quinone oxidoreductase subunit B 1 (194 aa).

[4Fe-4S] cluster-binding residues include Cys-73, Cys-74, Cys-138, and Cys-168.

It belongs to the complex I 20 kDa subunit family. In terms of assembly, NDH-1 is composed of 14 different subunits. Subunits NuoB, C, D, E, F, and G constitute the peripheral sector of the complex. Requires [4Fe-4S] cluster as cofactor.

It is found in the cell inner membrane. The enzyme catalyses a quinone + NADH + 5 H(+)(in) = a quinol + NAD(+) + 4 H(+)(out). Functionally, NDH-1 shuttles electrons from NADH, via FMN and iron-sulfur (Fe-S) centers, to quinones in the respiratory chain. The immediate electron acceptor for the enzyme in this species is believed to be ubiquinone. Couples the redox reaction to proton translocation (for every two electrons transferred, four hydrogen ions are translocated across the cytoplasmic membrane), and thus conserves the redox energy in a proton gradient. The protein is NADH-quinone oxidoreductase subunit B 1 of Rhizobium etli (strain CIAT 652).